Consider the following 208-residue polypeptide: Cytidylate kinase (208 aa).

9 to 17 (GPSASGKSS) provides a ligand contact to ATP.

This sequence belongs to the cytidylate kinase family. Type 1 subfamily.

It localises to the cytoplasm. It catalyses the reaction CMP + ATP = CDP + ADP. The enzyme catalyses dCMP + ATP = dCDP + ADP. The sequence is that of Cytidylate kinase from Thermus thermophilus (strain ATCC BAA-163 / DSM 7039 / HB27).